The chain runs to 477 residues: Acylamidase (477 aa).

Residues Lys82 and Ser157 each act as charge relay system in the active site. Ser181 acts as the Acyl-ester intermediate in catalysis.

It belongs to the amidase family.

The catalysed reaction is a monocarboxylic acid amide + H2O = a monocarboxylate + NH4(+). It catalyses the reaction an anilide + H2O = aniline + a carboxylate + H(+). The enzyme catalyses an N-acyl-L-amino acid + H2O = an L-alpha-amino acid + a carboxylate. It carries out the reaction an N-acetyl-L-cysteine-S-conjugate + H2O = an S-substituted L-cysteine + acetate. With respect to regulation, amidase activity is completely suppressed by inhibitors of serine proteases (phenylmethylsulfonyl fluoride and diisopropyl fluorophosphate), partially inhibited by copper and mercury ions, but is not affected by inhibitors of aliphatic amidases (acetaldehyde and nitrophenyl disulfides) or by EDTA. Amidase with broad substrate specificity, catalyzing the hydrolysis of a wide range of N-substituted amides, and, to a lesser extent, the hydrolysis of non-substituted amides. Acid para-nitroanilides (4'-nitroacetanilide, Gly-pNA, Ala-pNA, Leu-pNA) are the best substrates for this enzyme. N-substituted acrylamides (isopropyl acrylamide, N,N-dimethyl-aminopropyl acrylamide, and methylene-bis-acrylamide), N-acetyl derivatives of glycine, alanine and leucine, and aliphatic amides (acetamide, acrylamide, isobutyramide, n-butyramide, and valeramide) can also be used as substrates but with less efficiency. This is Acylamidase from Rhodococcus erythropolis (Arthrobacter picolinophilus).